The sequence spans 239 residues: Ribosomal RNA small subunit methyltransferase G (239 aa).

S-adenosyl-L-methionine contacts are provided by residues G79, F84, 130–131 (AE), and R149.

Belongs to the methyltransferase superfamily. RNA methyltransferase RsmG family.

It is found in the cytoplasm. Functionally, specifically methylates the N7 position of a guanine in 16S rRNA. This Lactobacillus delbrueckii subsp. bulgaricus (strain ATCC BAA-365 / Lb-18) protein is Ribosomal RNA small subunit methyltransferase G.